Consider the following 129-residue polypeptide: MIVRTTQAITGTERDVAAKDWRSKRIVLADDGVGFSFHETTINANSVSEFHYRHHVEAVWVVEGSGTLTDHETGEEFPLLPGTMYLLDGHERHRVTCHEQLRMLCVFNPPVTGQEVHDESGAYPAPVAS.

It belongs to the ectoine synthase family.

It catalyses the reaction (2S)-4-acetamido-2-aminobutanoate = L-ectoine + H2O. It functions in the pathway amine and polyamine biosynthesis; ectoine biosynthesis; L-ectoine from L-aspartate 4-semialdehyde: step 3/3. Functionally, catalyzes the circularization of gamma-N-acetyl-alpha,gamma-diaminobutyric acid (ADABA) to ectoine (1,4,5,6-tetrahydro-2-methyl-4-pyrimidine carboxylic acid), which is an excellent osmoprotectant. The chain is L-ectoine synthase from Mycobacterium sp. (strain KMS).